Consider the following 106-residue polypeptide: Protein RnfH (106 aa).

Belongs to the UPF0125 (RnfH) family.

The sequence is that of Protein RnfH from Ectopseudomonas mendocina (strain ymp) (Pseudomonas mendocina).